The chain runs to 451 residues: Potassium/sodium uptake protein NtpJ (451 aa).

11 helical membrane passes run 18–38 (IAAGFFILILFGGSLLTLPFF), 46–66 (HFIDALFTATSAVCVTGLTTL), 78–98 (FLIMTLIEIGGLGFMMIPILF), 133–153 (ILKFAVVIQVIGAVALSVVFI), 162–182 (IWFSIFHAVSSFCNAGFDLLG), 192–212 (VYLIMVVSALIIAGGLGFIVW), 230–250 (VALSVTALLLIGGFILFLITE), 293–313 (LILTMFLMYIGGTSGSTAGGL), 350–370 (ALTLFFVTLSLCVVAIMVLSV), 380–400 (IEYIAFEVFSAFGTVGLTMGL), and 410–430 (LVIISLMYIGRVGIMTVVFSL).

Belongs to the TrkH potassium transport family.

Its subcellular location is the cell membrane. Functionally, mediates electrogenic transport of potassium as well as sodium. Acts probably as a potassium-sodium cotransporter. Major sodium reentry pathway at high pH values. This chain is Potassium/sodium uptake protein NtpJ (ntpJ), found in Enterococcus hirae (strain ATCC 9790 / DSM 20160 / JCM 8729 / LMG 6399 / NBRC 3181 / NCIMB 6459 / NCDO 1258 / NCTC 12367 / WDCM 00089 / R).